The chain runs to 975 residues: Glycine dehydrogenase (decarboxylating) (975 aa).

Position 723 is an N6-(pyridoxal phosphate)lysine (K723).

It belongs to the GcvP family. As to quaternary structure, the glycine cleavage system is composed of four proteins: P, T, L and H. Requires pyridoxal 5'-phosphate as cofactor.

The catalysed reaction is N(6)-[(R)-lipoyl]-L-lysyl-[glycine-cleavage complex H protein] + glycine + H(+) = N(6)-[(R)-S(8)-aminomethyldihydrolipoyl]-L-lysyl-[glycine-cleavage complex H protein] + CO2. Functionally, the glycine cleavage system catalyzes the degradation of glycine. The P protein binds the alpha-amino group of glycine through its pyridoxal phosphate cofactor; CO(2) is released and the remaining methylamine moiety is then transferred to the lipoamide cofactor of the H protein. The chain is Glycine dehydrogenase (decarboxylating) from Burkholderia thailandensis (strain ATCC 700388 / DSM 13276 / CCUG 48851 / CIP 106301 / E264).